The sequence spans 886 residues: Alanine--tRNA ligase (886 aa).

Residues His564, His568, Cys666, and His670 each coordinate Zn(2+).

The protein belongs to the class-II aminoacyl-tRNA synthetase family. Zn(2+) is required as a cofactor.

The protein localises to the cytoplasm. The catalysed reaction is tRNA(Ala) + L-alanine + ATP = L-alanyl-tRNA(Ala) + AMP + diphosphate. Its function is as follows. Catalyzes the attachment of alanine to tRNA(Ala) in a two-step reaction: alanine is first activated by ATP to form Ala-AMP and then transferred to the acceptor end of tRNA(Ala). Also edits incorrectly charged Ser-tRNA(Ala) and Gly-tRNA(Ala) via its editing domain. In Prochlorococcus marinus (strain MIT 9301), this protein is Alanine--tRNA ligase.